The following is a 153-amino-acid chain: Gastric inhibitory polypeptide (153 aa).

Residues 1 to 21 (MVATKTFALLLLSLFLAVGLG) form the signal peptide. Propeptides lie at residues 22 to 50 (EKKE…PRGP) and 95 to 153 (EARA…LRSR). A disordered region spans residues 102–125 (ASQANRKEEEAVEPQSSPAKNPSD).

It belongs to the glucagon family.

It is found in the secreted. Functionally, potent stimulator of insulin secretion and relatively poor inhibitor of gastric acid secretion. In Homo sapiens (Human), this protein is Gastric inhibitory polypeptide (GIP).